Consider the following 1102-residue polypeptide: Carbamoyl phosphate synthase large chain (1102 aa).

The interval 1–408 (MPKRTDIQSV…ALQKALRSLE (408 aa)) is carboxyphosphate synthetic domain. 12 residues coordinate ATP: Arg129, Arg175, Gly181, Gly182, Glu214, Ile216, Glu221, Gly247, Val248, His249, Gln291, and Glu305. In terms of domain architecture, ATP-grasp 1 spans 138-334 (AVRAKIGHGE…IAKIAAKLAV (197 aa)). Positions 291, 305, and 307 each coordinate Mg(2+). Residues Gln291, Glu305, and Asn307 each contribute to the Mn(2+) site. The oligomerization domain stretch occupies residues 409 to 551 (KKGSQFTFVG…YFYSSYDEES (143 aa)). The tract at residues 552–954 (EVAPREKPAV…AYAKSQAGAY (403 aa)) is carbamoyl phosphate synthetic domain. The 192-residue stretch at 682-873 (GQVLAEAGLP…LAKAAARISL (192 aa)) folds into the ATP-grasp 2 domain. Positions 718, 757, 759, 764, 789, 790, 791, 792, 832, and 844 each coordinate ATP. Positions 832, 844, and 846 each coordinate Mg(2+). Gln832, Glu844, and Asn846 together coordinate Mn(2+). An MGS-like domain is found at 955–1100 (GPLPTKGRAF…QEHAEHLTAA (146 aa)). Positions 955–1102 (GPLPTKGRAF…HAEHLTAARD (148 aa)) are allosteric domain.

The protein belongs to the CarB family. Composed of two chains; the small (or glutamine) chain promotes the hydrolysis of glutamine to ammonia, which is used by the large (or ammonia) chain to synthesize carbamoyl phosphate. Tetramer of heterodimers (alpha,beta)4. Mg(2+) serves as cofactor. The cofactor is Mn(2+).

It catalyses the reaction hydrogencarbonate + L-glutamine + 2 ATP + H2O = carbamoyl phosphate + L-glutamate + 2 ADP + phosphate + 2 H(+). The enzyme catalyses hydrogencarbonate + NH4(+) + 2 ATP = carbamoyl phosphate + 2 ADP + phosphate + 2 H(+). The protein operates within amino-acid biosynthesis; L-arginine biosynthesis; carbamoyl phosphate from bicarbonate: step 1/1. It participates in pyrimidine metabolism; UMP biosynthesis via de novo pathway; (S)-dihydroorotate from bicarbonate: step 1/3. Its function is as follows. Large subunit of the glutamine-dependent carbamoyl phosphate synthetase (CPSase). CPSase catalyzes the formation of carbamoyl phosphate from the ammonia moiety of glutamine, carbonate, and phosphate donated by ATP, constituting the first step of 2 biosynthetic pathways, one leading to arginine and/or urea and the other to pyrimidine nucleotides. The large subunit (synthetase) binds the substrates ammonia (free or transferred from glutamine from the small subunit), hydrogencarbonate and ATP and carries out an ATP-coupled ligase reaction, activating hydrogencarbonate by forming carboxy phosphate which reacts with ammonia to form carbamoyl phosphate. This chain is Carbamoyl phosphate synthase large chain, found in Streptomyces avermitilis (strain ATCC 31267 / DSM 46492 / JCM 5070 / NBRC 14893 / NCIMB 12804 / NRRL 8165 / MA-4680).